The following is a 358-amino-acid chain: Thiol protease aleurain-like (358 aa).

Residues 1–21 form the signal peptide; that stretch reads MSVKLNLSSSILLILFAAAAS. The propeptide at 22 to 140 is activation peptide; it reads KEIGFDESNP…KGSHKITEAT (119 aa). A glycan (N-linked (GlcNAc...) asparagine) is linked at Asn-125. 2 disulfides stabilise this stretch: Cys-162-Cys-205 and Cys-196-Cys-238. The active site involves Cys-165. Asn-254 carries N-linked (GlcNAc...) asparagine glycosylation. Cysteines 296 and 346 form a disulfide. Residues His-305 and Asn-325 contribute to the active site.

It belongs to the peptidase C1 family.

It localises to the vacuole. It carries out the reaction Hydrolysis of proteins, acting as an aminopeptidase (notably, cleaving Arg-|-Xaa bonds) as well as an endopeptidase.. In terms of biological role, may play a role in proteolysis leading to mobilization of nitrogen during senescence and starvation. This is Thiol protease aleurain-like from Arabidopsis thaliana (Mouse-ear cress).